Consider the following 251-residue polypeptide: Triosephosphate isomerase (251 aa).

9–11 contacts substrate; that stretch reads NWK. The active-site Electrophile is the histidine 95. The active-site Proton acceptor is the glutamate 167. Residues glycine 173, serine 212, and 233 to 234 contribute to the substrate site; that span reads GG.

This sequence belongs to the triosephosphate isomerase family. In terms of assembly, homodimer.

The protein resides in the cytoplasm. It carries out the reaction D-glyceraldehyde 3-phosphate = dihydroxyacetone phosphate. Its pathway is carbohydrate biosynthesis; gluconeogenesis. It functions in the pathway carbohydrate degradation; glycolysis; D-glyceraldehyde 3-phosphate from glycerone phosphate: step 1/1. Its function is as follows. Involved in the gluconeogenesis. Catalyzes stereospecifically the conversion of dihydroxyacetone phosphate (DHAP) to D-glyceraldehyde-3-phosphate (G3P). The protein is Triosephosphate isomerase of Pseudomonas syringae pv. syringae (strain B728a).